Reading from the N-terminus, the 95-residue chain is Putative regulatory protein Daud_1598 (95 aa).

This sequence belongs to the RemA family.

The chain is Putative regulatory protein Daud_1598 from Desulforudis audaxviator (strain MP104C).